Here is a 428-residue protein sequence, read N- to C-terminus: C4-dicarboxylate transport protein (428 aa).

The next 8 membrane-spanning stretches (helical) occupy residues 8–28, 44–64, 76–96, 142–162, 184–204, 222–242, 326–346, and 352–372; these read SLYF…HFYP, LIKM…IAGM, VALL…LIIV, IGAF…LFGF, VIFG…FGAM, LIIC…GSIA, IVHQ…AAGV, and IVLA…LALI.

It belongs to the dicarboxylate/amino acid:cation symporter (DAACS) (TC 2.A.23) family.

It localises to the cell inner membrane. Responsible for the transport of dicarboxylates such as succinate, fumarate, and malate from the periplasm across the membrane. The protein is C4-dicarboxylate transport protein of Escherichia coli O139:H28 (strain E24377A / ETEC).